Here is a 124-residue protein sequence, read N- to C-terminus: Small ribosomal subunit protein uS12 (124 aa).

A 3-methylthioaspartic acid modification is found at D89. The disordered stretch occupies residues 104-124; that stretch reads TAGVKDRRQSRSKYGAKTPKE.

It belongs to the universal ribosomal protein uS12 family. As to quaternary structure, part of the 30S ribosomal subunit. Contacts proteins S8 and S17. May interact with IF1 in the 30S initiation complex.

In terms of biological role, with S4 and S5 plays an important role in translational accuracy. Interacts with and stabilizes bases of the 16S rRNA that are involved in tRNA selection in the A site and with the mRNA backbone. Located at the interface of the 30S and 50S subunits, it traverses the body of the 30S subunit contacting proteins on the other side and probably holding the rRNA structure together. The combined cluster of proteins S8, S12 and S17 appears to hold together the shoulder and platform of the 30S subunit. This is Small ribosomal subunit protein uS12 from Parasynechococcus marenigrum (strain WH8102).